The chain runs to 223 residues: Methanol utilization control regulatory protein MoxX (223 aa).

Residues Gln16 to Ala133 enclose the Response regulatory domain. The 66-residue stretch at Pro155–Phe220 folds into the HTH luxR-type domain. A DNA-binding region (H-T-H motif) is located at residues Tyr179–Leu198.

Post-translationally, phosphorylated by MoxY.

The protein localises to the cytoplasm. Functionally, member of the two-component regulatory system MoxY/MoxX probably involved in the regulation of the methanol dehydrogenase expression. The protein is Methanol utilization control regulatory protein MoxX (moxX) of Paracoccus denitrificans.